Reading from the N-terminus, the 298-residue chain is Protease HtpX homolog (298 aa).

The next 2 membrane-spanning stretches (helical) occupy residues 14–34 (VVLL…AGYL) and 39–59 (YAMG…SMIF). Histidine 143 contacts Zn(2+). Residue glutamate 144 is part of the active site. Histidine 147 serves as a coordination point for Zn(2+). Helical transmembrane passes span 158–178 (IAVA…RMLW) and 197–217 (IITL…ASLI). Glutamate 226 serves as a coordination point for Zn(2+).

Belongs to the peptidase M48B family. It depends on Zn(2+) as a cofactor.

It localises to the cell membrane. The protein is Protease HtpX homolog of Streptococcus pyogenes serotype M6 (strain ATCC BAA-946 / MGAS10394).